We begin with the raw amino-acid sequence, 319 residues long: Alpha-hemolysin (319 aa).

An N-terminal signal peptide occupies residues 1–26; that stretch reads MKTRIVSSVTTTLLLGSILMNPVAGA.

It belongs to the aerolysin family. Self-assembles to first form a non-lytic oligomeric intermediate, and then, a mushroom-shaped homoheptamer structure of 100 Angstroms in length and up to 100 Angstroms in diameter. Interacts with human ADAM10; this interaction is required for toxin pore formation, disruption of focal adhesions, and hly-mediated cytotoxicity.

It is found in the secreted. Alpha-toxin binds to the membrane of eukaryotic cells (particularly red blood cells, RBC) forming pores, resulting in hemolysis, with the release of low-molecular weight molecules leading to eventual osmotic RBC lysis. Human RBCs bind much less alpha-toxin than do rabbit RBCs. Heptamer oligomerization and pore formation is required for lytic activity. This Staphylococcus aureus protein is Alpha-hemolysin (hly).